The sequence spans 490 residues: Selenium-binding protein 1 (490 aa).

N-acetylalanine is present on Ala2. Cys21 and Cys22 together coordinate selenite.

Belongs to the selenium-binding protein family. Interacts with GRXS14 and GRXS16. Interacts with DALL3. As to expression, expressed in seedlings, roots, leaves, stems and flowers.

Its function is as follows. Binds cadmium and mediates lower sensitivity to stress requiring glutathione (GSH) for tolerance (e.g. cadmium, selenate, and hydrogen peroxide excess). Probably helps to detoxify cadmium potentially through direct binding. Binds selenium, cadmium, zinc and nickel in vitro. The sequence is that of Selenium-binding protein 1 from Arabidopsis thaliana (Mouse-ear cress).